The chain runs to 128 residues: Deoxycytidylate deaminase (128 aa).

Residues 5-128 (DWDEYFLGIA…IERVVYPKES (124 aa)) enclose the CMP/dCMP-type deaminase domain. Position 81 (His-81) interacts with Zn(2+). Glu-83 serves as the catalytic Proton donor. 2 residues coordinate Zn(2+): Cys-107 and Cys-110.

Belongs to the cytidine and deoxycytidylate deaminase family.

It carries out the reaction dCMP + H2O + H(+) = dUMP + NH4(+). This Mycobacterium (Mycobacteriophage D29) protein is Deoxycytidylate deaminase (36.1).